Consider the following 356-residue polypeptide: Guanine nucleotide-binding protein alpha-15 subunit (356 aa).

Residue Gly2 is the site of N-myristoyl glycine attachment. Cys5 carries S-palmitoyl cysteine lipidation. Residues 33-356 (GNQKLLLLGT…GRNLRGTGME (324 aa)) form the G-alpha domain. The tract at residues 36 to 49 (KLLLLGTGECGKST) is G1 motif. GTP is bound by residues 41–48 (GTGECGKS), 177–183 (LRIRIPT), 202–206 (DVGGQ), 271–274 (NKRD), and Ala328. Mg(2+) is bound by residues Ser48 and Thr183. Positions 175 to 183 (DMLRIRIPT) are G2 motif. Residues 198–207 (FRIFDVGGQR) are G3 motif. Positions 267–274 (ILFLNKRD) are G4 motif. Positions 326–331 (TCATDT) are G5 motif.

This sequence belongs to the G-alpha family. In terms of assembly, g proteins are composed of 3 units; alpha, beta and gamma. The alpha chain contains the guanine nucleotide binding site.

In terms of biological role, guanine nucleotide-binding proteins (G proteins) are involved as modulators or transducers in various transmembrane signaling systems. The polypeptide is Guanine nucleotide-binding protein alpha-15 subunit (gpa-15) (Caenorhabditis briggsae).